A 470-amino-acid chain; its full sequence is 5-hydroxytryptamine receptor 2A (470 aa).

The Extracellular segment spans residues 1 to 80 (MDVLCEENTS…LQEKNWSALL (80 aa)). 6 N-linked (GlcNAc...) asparagine glycosylation sites follow: N8, N38, N44, N51, N54, and N75. The helical transmembrane segment at 81–97 (TAVVIILTIAGNILVIM) threads the bilayer. The Cytoplasmic portion of the chain corresponds to 98–111 (AVSLEKKLQNATNY). Residues 112-137 (FLMSLAIADMLLGFLVMPVSMLTILY) form a helical membrane-spanning segment. Topologically, residues 138–146 (GYRWPLPSK) are extracellular. The chain crosses the membrane as a helical span at residues 147-171 (LCAVWIYLDVLFSTASIMHLCAISL). A disulfide bridge connects residues C148 and C227. D155 contributes to the serotonin binding site. The short motif at 172 to 174 (DRY) is the DRY motif; important for ligand-induced conformation changes element. The Cytoplasmic portion of the chain corresponds to 172-191 (DRYVAIQNPIHHRRFNSRTK). A helical transmembrane segment spans residues 192 to 215 (AFLKIIAVWTISVGISMPIPVFGL). Topologically, residues 216-232 (QDDSKVFKEGSCLLADD) are extracellular. A helical transmembrane segment spans residues 233-258 (NFVLIGSFVSFFIPLTIMVITYFLTI). The Cytoplasmic segment spans residues 259–321 (KSLQKEATLC…QSISNEQKAC (63 aa)). The residue at position 280 (S280) is a Phosphoserine. A helical membrane pass occupies residues 322–347 (KVLGIVFFLFVVMWCPFFITNIMAVI). Residue N342 coordinates serotonin. An intrachain disulfide couples C348 to C352. At 348–355 (CKESCNED) the chain is on the extracellular side. Residues 356 to 381 (VIGALLNVFVWIGYLSSAVNPLVYTL) traverse the membrane as a helical segment. The NPxxY motif; important for ligand-induced conformation changes and signaling signature appears at 375-379 (NPLVY). Topologically, residues 382 to 470 (FNKTYRSAFS…NTVNEKVSCV (89 aa)) are cytoplasmic. The disordered stretch occupies residues 448 to 470 (GKQHSEDAPADNSNTVNEKVSCV). Residues 458–470 (DNSNTVNEKVSCV) show a composition bias toward polar residues. The PDZ-binding signature appears at 468–470 (SCV).

This sequence belongs to the G-protein coupled receptor 1 family. In terms of assembly, interacts (via C-terminus) with MPDZ and PATJ. May interact (via C-terminus) with MPP3, PRDX6, DLG4, DLG1, CASK, APBA1 and MAGI2. Interacts with GRM2 and DRD2; this may affect signaling.

The protein localises to the cell membrane. It is found in the cell projection. It localises to the dendrite. Its subcellular location is the axon. The protein resides in the cytoplasmic vesicle. The protein localises to the membrane. It is found in the caveola. It localises to the presynapse. With respect to regulation, G-protein coupled receptor activity is regulated by lipids: oleamide increases HTR2A-mediated activity. In terms of biological role, G-protein coupled receptor for 5-hydroxytryptamine (serotonin). Also functions as a receptor for various drugs and psychoactive substances, including mescaline, psilocybin, 1-(2,5-dimethoxy-4-iodophenyl)-2-aminopropane (DOI) and lysergic acid diethylamide (LSD). Ligand binding causes a conformation change that triggers signaling via guanine nucleotide-binding proteins (G proteins) and modulates the activity of downstream effectors. HTR2A is coupled to G(q)/G(11) G alpha proteins and activates phospholipase C-beta, releasing diacylglycerol (DAG) and inositol 1,4,5-trisphosphate (IP3) second messengers that modulate the activity of phosphatidylinositol 3-kinase and promote the release of Ca(2+) ions from intracellular stores, respectively. Beta-arrestin family members inhibit signaling via G proteins and mediate activation of alternative signaling pathways. Affects neural activity, perception, cognition and mood. Plays a role in the regulation of behavior, including responses to anxiogenic situations and psychoactive substances. Plays a role in intestinal smooth muscle contraction, and may play a role in arterial vasoconstriction. The chain is 5-hydroxytryptamine receptor 2A (HTR2A) from Sus scrofa (Pig).